Consider the following 240-residue polypeptide: Uridylate kinase (240 aa).

Residue 9-12 participates in ATP binding; the sequence is KLSG. Gly51 contacts UMP. Residues Gly52 and Arg56 each coordinate ATP. UMP is bound by residues Asp71 and 132–139; that span reads TGNPFFTT. 3 residues coordinate ATP: Thr159, Tyr165, and Asp168.

It belongs to the UMP kinase family. As to quaternary structure, homohexamer.

It localises to the cytoplasm. It catalyses the reaction UMP + ATP = UDP + ADP. The protein operates within pyrimidine metabolism; CTP biosynthesis via de novo pathway; UDP from UMP (UMPK route): step 1/1. Inhibited by UTP. In terms of biological role, catalyzes the reversible phosphorylation of UMP to UDP. This is Uridylate kinase from Synechococcus elongatus (strain ATCC 33912 / PCC 7942 / FACHB-805) (Anacystis nidulans R2).